Consider the following 132-residue polypeptide: Iron-sulfur cluster assembly 1 homolog, mitochondrial (132 aa).

The N-terminal 15 residues, 1–15 (MASSASSVVRATVRA), are a transit peptide targeting the mitochondrion. Residues cysteine 60, cysteine 124, and cysteine 126 each coordinate Fe cation.

It belongs to the HesB/IscA family. As to quaternary structure, homooligomer, forming a rod-shaped structure 24 nm in length that may arise through a double-helical assembly of subunits. Interacts with CRY4; CRY4 seems to be associated with the outside of the rod-shaped homooligomer. Does not interact with CRY1 or CRY2. In terms of tissue distribution, detected in retina, especially in the retinal ganglion layer, the inner nuclear layer and the outer nuclear layer. Detected in retina visual pigment cells (at protein level).

Its subcellular location is the mitochondrion. In terms of biological role, involved in the maturation of mitochondrial 4Fe-4S proteins functioning late in the iron-sulfur cluster assembly pathway. Probably involved in the binding of an intermediate of Fe/S cluster assembly. Component of a putative magnetoreceptor complex formed by ISCA1 and CRY4, a member of the cryptochrome family that are known to be required for light-dependent magnetosensitivity in various orgnisms. The rod-like assembly may facilitate the perception of the Earth's weak magnetic field. Both ISCA1 and the complex with CRY4 have magnetic properties and are attracted to iron beads. When exposed to a magnetic field of 1 mT (superior to the natural magnetic field), over 50% of the rod-like complexes align more or less in parallel with the magnetic field at room temperature. The chain is Iron-sulfur cluster assembly 1 homolog, mitochondrial (ISCA1) from Columba livia (Rock dove).